Reading from the N-terminus, the 71-residue chain is Large ribosomal subunit protein bL31 (71 aa).

Zn(2+) contacts are provided by cysteine 16, cysteine 18, cysteine 36, and cysteine 39.

The protein belongs to the bacterial ribosomal protein bL31 family. Type A subfamily. As to quaternary structure, part of the 50S ribosomal subunit. The cofactor is Zn(2+).

In terms of biological role, binds the 23S rRNA. The polypeptide is Large ribosomal subunit protein bL31 (Thermotoga maritima (strain ATCC 43589 / DSM 3109 / JCM 10099 / NBRC 100826 / MSB8)).